Here is a 513-residue protein sequence, read N- to C-terminus: Light-independent protochlorophyllide reductase subunit B (513 aa).

Asp36 is a binding site for [4Fe-4S] cluster. Asp299 acts as the Proton donor in catalysis. A substrate-binding site is contributed by Gly434–Met435.

It belongs to the ChlB/BchB/BchZ family. As to quaternary structure, protochlorophyllide reductase is composed of three subunits; ChlL, ChlN and ChlB. Forms a heterotetramer of two ChlB and two ChlN subunits. [4Fe-4S] cluster serves as cofactor.

Its subcellular location is the plastid. It localises to the chloroplast. The catalysed reaction is chlorophyllide a + oxidized 2[4Fe-4S]-[ferredoxin] + 2 ADP + 2 phosphate = protochlorophyllide a + reduced 2[4Fe-4S]-[ferredoxin] + 2 ATP + 2 H2O. Its pathway is porphyrin-containing compound metabolism; chlorophyll biosynthesis (light-independent). Functionally, component of the dark-operative protochlorophyllide reductase (DPOR) that uses Mg-ATP and reduced ferredoxin to reduce ring D of protochlorophyllide (Pchlide) to form chlorophyllide a (Chlide). This reaction is light-independent. The NB-protein (ChlN-ChlB) is the catalytic component of the complex. The polypeptide is Light-independent protochlorophyllide reductase subunit B (Chaetosphaeridium globosum (Charophycean green alga)).